A 453-amino-acid chain; its full sequence is Iron-sulfur cluster assembly SufBD family protein slr0076 (453 aa).

The protein belongs to the iron-sulfur cluster assembly SufBD family.

The sequence is that of Iron-sulfur cluster assembly SufBD family protein slr0076 from Synechocystis sp. (strain ATCC 27184 / PCC 6803 / Kazusa).